Reading from the N-terminus, the 155-residue chain is Small ribosomal subunit protein uS7 (155 aa).

The protein belongs to the universal ribosomal protein uS7 family. As to quaternary structure, part of the 30S ribosomal subunit. Contacts proteins S9 and S11.

Functionally, one of the primary rRNA binding proteins, it binds directly to 16S rRNA where it nucleates assembly of the head domain of the 30S subunit. Is located at the subunit interface close to the decoding center, probably blocks exit of the E-site tRNA. In Thermosipho africanus (strain TCF52B), this protein is Small ribosomal subunit protein uS7.